We begin with the raw amino-acid sequence, 366 residues long: tRNA/tmRNA (uracil-C(5))-methyltransferase (366 aa).

Residues glutamine 190, tyrosine 218, asparagine 223, glutamate 239, and aspartate 299 each coordinate S-adenosyl-L-methionine. The active-site Nucleophile is cysteine 324. The Proton acceptor role is filled by glutamate 358.

Belongs to the class I-like SAM-binding methyltransferase superfamily. RNA M5U methyltransferase family. TrmA subfamily.

The enzyme catalyses uridine(54) in tRNA + S-adenosyl-L-methionine = 5-methyluridine(54) in tRNA + S-adenosyl-L-homocysteine + H(+). It carries out the reaction uridine(341) in tmRNA + S-adenosyl-L-methionine = 5-methyluridine(341) in tmRNA + S-adenosyl-L-homocysteine + H(+). Its function is as follows. Dual-specificity methyltransferase that catalyzes the formation of 5-methyluridine at position 54 (m5U54) in all tRNAs, and that of position 341 (m5U341) in tmRNA (transfer-mRNA). In Salmonella paratyphi A (strain ATCC 9150 / SARB42), this protein is tRNA/tmRNA (uracil-C(5))-methyltransferase.